The chain runs to 500 residues: UDP-N-acetylmuramoyl-L-alanyl-D-glutamate--2,6-diaminopimelate ligase (500 aa).

Serine 38 is a UDP-N-acetyl-alpha-D-muramoyl-L-alanyl-D-glutamate binding site. 118–124 serves as a coordination point for ATP; it reads GTNGKTS. Residues 160-161, serine 187, and arginine 195 contribute to the UDP-N-acetyl-alpha-D-muramoyl-L-alanyl-D-glutamate site; that span reads TT. The residue at position 227 (lysine 227) is an N6-carboxylysine. Meso-2,6-diaminopimelate is bound by residues arginine 395, 419-422, glycine 471, and glutamate 475; that span reads DNPR. Positions 419–422 match the Meso-diaminopimelate recognition motif motif; sequence DNPR.

It belongs to the MurCDEF family. MurE subfamily. Mg(2+) serves as cofactor. Carboxylation is probably crucial for Mg(2+) binding and, consequently, for the gamma-phosphate positioning of ATP.

The protein localises to the cytoplasm. It catalyses the reaction UDP-N-acetyl-alpha-D-muramoyl-L-alanyl-D-glutamate + meso-2,6-diaminopimelate + ATP = UDP-N-acetyl-alpha-D-muramoyl-L-alanyl-gamma-D-glutamyl-meso-2,6-diaminopimelate + ADP + phosphate + H(+). It participates in cell wall biogenesis; peptidoglycan biosynthesis. In terms of biological role, catalyzes the addition of meso-diaminopimelic acid to the nucleotide precursor UDP-N-acetylmuramoyl-L-alanyl-D-glutamate (UMAG) in the biosynthesis of bacterial cell-wall peptidoglycan. In Leptospira borgpetersenii serovar Hardjo-bovis (strain L550), this protein is UDP-N-acetylmuramoyl-L-alanyl-D-glutamate--2,6-diaminopimelate ligase.